The following is a 95-amino-acid chain: uncharacterized protein (95 aa).

Residues 12-32 (IASLVVSVVVLLIGLILWFFI) form a helical membrane-spanning segment.

The protein localises to the cell membrane. This is an uncharacterized protein from Escherichia coli O6:H1 (strain CFT073 / ATCC 700928 / UPEC).